A 249-amino-acid chain; its full sequence is 1-(5-phosphoribosyl)-5-[(5-phosphoribosylamino)methylideneamino] imidazole-4-carboxamide isomerase (249 aa).

D8 (proton acceptor) is an active-site residue. Residue D129 is the Proton donor of the active site.

The protein belongs to the HisA/HisF family.

The protein localises to the cytoplasm. The enzyme catalyses 1-(5-phospho-beta-D-ribosyl)-5-[(5-phospho-beta-D-ribosylamino)methylideneamino]imidazole-4-carboxamide = 5-[(5-phospho-1-deoxy-D-ribulos-1-ylimino)methylamino]-1-(5-phospho-beta-D-ribosyl)imidazole-4-carboxamide. Its pathway is amino-acid biosynthesis; L-histidine biosynthesis; L-histidine from 5-phospho-alpha-D-ribose 1-diphosphate: step 4/9. The protein is 1-(5-phosphoribosyl)-5-[(5-phosphoribosylamino)methylideneamino] imidazole-4-carboxamide isomerase of Rhizobium rhizogenes (strain K84 / ATCC BAA-868) (Agrobacterium radiobacter).